The following is a 545-amino-acid chain: T-complex protein 1 subunit alpha (545 aa).

This sequence belongs to the TCP-1 chaperonin family. Heterooligomeric complex of about 850 to 900 kDa that forms two stacked rings, 12 to 16 nm in diameter.

It localises to the cytoplasm. Its function is as follows. Molecular chaperone; assists the folding of proteins upon ATP hydrolysis. Known to play a role, in vitro, in the folding of actin and tubulin. The protein is T-complex protein 1 subunit alpha (TCP-1A) of Schistosoma mansoni (Blood fluke).